The following is a 521-amino-acid chain: Membrane-bound transcription factor site-2 protease (521 aa).

The Cytoplasmic segment spans residues 1–3; that stretch reads MIP. A helical membrane pass occupies residues 4–24; sequence VSLVVVVVGGWTVVYLTDLVL. Over 25 to 74 the chain is Lumenal; sequence KSSVYFKHSYEDWLESNGLSISPFHIRWQTAVFNRAFYSWGRRKARMLYQ. 2 consecutive transmembrane segments (helical) span residues 75–95 and 96–107; these read WFNF…FLLG and KTLMQTLAQMMA. Residues 108–146 are Lumenal-facing; it reads DSPSSYSSSSSSSSSSSSSSSSSSSSSSSSSLHNEQVLQ. The tract at residues 113 to 137 is disordered; the sequence is YSSSSSSSSSSSSSSSSSSSSSSSS. Residues 147–171 form a helical membrane-spanning segment; it reads VVVPGINLPVNQLTYFFAAVLISGV. His173 provides a ligand contact to Zn(2+). Glu174 is a catalytic residue. A run of 3 helical transmembrane segments spans residues 176–188, 189–211, and 231–253; these read GHGI…QVRF, NGFG…TTHL, and FVLA…PFYY. His177 contacts Zn(2+). Over 254 to 448 the chain is Lumenal; it reads TGVGVLITEV…LPVVVETFVK (195 aa). An N-linked (GlcNAc...) asparagine glycan is attached at Asn339. 2 consecutive transmembrane segments (helical) span residues 449 to 466 and 467 to 478; these read YLIS…VPCF and ALDGQWILNSFL. At 479–494 the chain is on the lumenal side; the sequence is DATLTSVIGDNDVKDL. Residues 495 to 515 traverse the membrane as a helical segment; it reads IGFFILLGGSVLLAANVTLGL. Topologically, residues 516–521 are cytoplasmic; it reads WMVTAR.

The protein belongs to the peptidase M50A family. It depends on Zn(2+) as a cofactor.

The protein localises to the membrane. The protein resides in the cytoplasm. It localises to the golgi apparatus membrane. It carries out the reaction Cleaves several transcription factors that are type-2 transmembrane proteins within membrane-spanning domains. Known substrates include sterol regulatory element-binding protein (SREBP) -1, SREBP-2 and forms of the transcriptional activator ATF6. SREBP-2 is cleaved at the site 477-DRSRILL-|-CVLTFLCLSFNPLTSLLQWGGA-505. The residues Asn-Pro, 11 residues distal to the site of cleavage in the membrane-spanning domain, are important for cleavage by S2P endopeptidase. Replacement of either of these residues does not prevent cleavage, but there is no cleavage if both of these residues are replaced.. Its function is as follows. Zinc metalloprotease that mediates intramembrane proteolysis of proteins such as ATF6, ATF6B, SREBF1/SREBP1 and SREBF2/SREBP2. Catalyzes the second step in the proteolytic activation of the sterol regulatory element-binding proteins (SREBPs) SREBF1/SREBP1 and SREBF2/SREBP2: cleaves SREBPs within the first transmembrane segment, thereby releasing the N-terminal segment with a portion of the transmembrane segment attached. Mature N-terminal SREBP fragments shuttle to the nucleus and activate gene transcription. Also mediates the second step in the proteolytic activation of the cyclic AMP-dependent transcription factor ATF-6 (ATF6 and ATF6B). Involved in intramembrane proteolysis during bone formation. In astrocytes and osteoblasts, upon DNA damage and ER stress, mediates the second step of the regulated intramembrane proteolytic activation of the transcription factor CREB3L1, leading to the inhibition of cell-cycle progression. The protein is Membrane-bound transcription factor site-2 protease (MBTPS2) of Pongo abelii (Sumatran orangutan).